A 194-amino-acid chain; its full sequence is Peptidyl-tRNA hydrolase (194 aa).

A tRNA-binding site is contributed by Y16. H21 functions as the Proton acceptor in the catalytic mechanism. Residues F67, N69, and N115 each coordinate tRNA.

Belongs to the PTH family. In terms of assembly, monomer.

The protein localises to the cytoplasm. The enzyme catalyses an N-acyl-L-alpha-aminoacyl-tRNA + H2O = an N-acyl-L-amino acid + a tRNA + H(+). Its function is as follows. Hydrolyzes ribosome-free peptidyl-tRNAs (with 1 or more amino acids incorporated), which drop off the ribosome during protein synthesis, or as a result of ribosome stalling. In terms of biological role, catalyzes the release of premature peptidyl moieties from peptidyl-tRNA molecules trapped in stalled 50S ribosomal subunits, and thus maintains levels of free tRNAs and 50S ribosomes. This chain is Peptidyl-tRNA hydrolase, found in Salmonella agona (strain SL483).